We begin with the raw amino-acid sequence, 193 residues long: Recombination protein RecR (193 aa).

The C4-type zinc finger occupies 61-76 (CASCNALSESEICEIC). Residues 84–170 (SQLCMVLHPR…TFTKIAQGVP (87 aa)) enclose the Toprim domain.

The protein belongs to the RecR family.

Functionally, may play a role in DNA repair. It seems to be involved in an RecBC-independent recombinational process of DNA repair. It may act with RecF and RecO. In Helicobacter pylori (strain Shi470), this protein is Recombination protein RecR.